Consider the following 34-residue polypeptide: Small, acid-soluble spore protein M (34 aa).

Residues 1-10 are compositionally biased toward basic residues; sequence MKTRPKKAGQ. Residues 1-34 are disordered; it reads MKTRPKKAGQQKKTESKAIDSLDKKLGGPNRPST. The span at 12–26 shows a compositional bias: basic and acidic residues; that stretch reads KKTESKAIDSLDKKL.

The protein localises to the spore core. This chain is Small, acid-soluble spore protein M (sspM), found in Bacillus subtilis (strain 168).